Here is a 248-residue protein sequence, read N- to C-terminus: 2,3-bisphosphoglycerate-dependent phosphoglycerate mutase (248 aa).

Residues 8–15 (RHGESEWN), 21–22 (TG), arginine 60, 87–90 (ERHY), lysine 98, 114–115 (RR), and 183–184 (GN) contribute to the substrate site. The Tele-phosphohistidine intermediate role is filled by histidine 9. Residue glutamate 87 is the Proton donor/acceptor of the active site.

It belongs to the phosphoglycerate mutase family. BPG-dependent PGAM subfamily.

It carries out the reaction (2R)-2-phosphoglycerate = (2R)-3-phosphoglycerate. The protein operates within carbohydrate degradation; glycolysis; pyruvate from D-glyceraldehyde 3-phosphate: step 3/5. Functionally, catalyzes the interconversion of 2-phosphoglycerate and 3-phosphoglycerate. The protein is 2,3-bisphosphoglycerate-dependent phosphoglycerate mutase of Coprothermobacter proteolyticus (strain ATCC 35245 / DSM 5265 / OCM 4 / BT).